The following is a 134-amino-acid chain: Holo-[acyl-carrier-protein] synthase (134 aa).

2 residues coordinate Mg(2+): Asp8 and Glu57.

Belongs to the P-Pant transferase superfamily. AcpS family. Mg(2+) serves as cofactor.

The protein resides in the cytoplasm. It carries out the reaction apo-[ACP] + CoA = holo-[ACP] + adenosine 3',5'-bisphosphate + H(+). Transfers the 4'-phosphopantetheine moiety from coenzyme A to a Ser of acyl-carrier-protein. The protein is Holo-[acyl-carrier-protein] synthase of Agrobacterium fabrum (strain C58 / ATCC 33970) (Agrobacterium tumefaciens (strain C58)).